The following is a 298-amino-acid chain: Lactose transport system permease protein LacF (298 aa).

6 helical membrane passes run 17–37 (GWLF…YPIL), 77–97 (VIFF…LAAM), 112–132 (MIFL…KSMF), 151–171 (PIGW…AITW), 208–228 (AFLT…TSTI), and 269–289 (FSYA…LSFL). In terms of domain architecture, ABC transmembrane type-1 spans 73-290 (LQNTVIFFVV…LMVAVLSFLQ (218 aa)).

Belongs to the binding-protein-dependent transport system permease family. MalFG subfamily.

The protein resides in the cell inner membrane. Part of the binding-protein-dependent transport system for lactose. Probably responsible for the translocation of the substrate across the membrane. In Rhizobium radiobacter (Agrobacterium tumefaciens), this protein is Lactose transport system permease protein LacF (lacF).